The primary structure comprises 566 residues: MPKLEIYKNLFLDKIGKNFTNLEISELLEPFKAEFDGFDESSGKIKIEFNDTNRPDLWSYLGLARQIKTYFFGEMPYYDFFSKKGDFKKFYGEILVDGKMSQIRPFIFGFLAKGLIINDKMLETLIQFQEKLCQNYGQKRRRIAMGMYNSNFIKFPISYIASSPNHKFVPFGMDYELSLLEINEKHPKGLEYSHIIKNFDKFPLLLDDNNNVVSYPPIINSNNIGSLKVGDTDLFVEVTGIDFEATLLALSIAACDFYDMGFEILPVKTVFREPFNLDFKELVCPYYFQEEVEFNVENINRLLGSNLTLERICLSLKKMGVNSYSKDFKNYIVPPFYRNDFLHEVDVIEDVMIGEGLSSFNPELPKAFAVGRLSPLEEFSRNVRNLMVGMGFQEMIYNYMGSKKDFIDRMNINDQNFLKVSNPMTENYEYIRASIIPNLLKSESVSSNFPYPHKIFEIGKVALKNLDTTEGTSTFTNLAFLMSGKEISFNEINSIVATLFYYLNIEINLIESKTTFYINGRGADIVIEGFNIGGFGEISPYVLNNFGIFIPCSVFEVNINKLMSRS.

Positions 287–362 constitute a B5 domain; sequence YFQEEVEFNV…IGEGLSSFNP (76 aa). The Mg(2+) site is built by Asp340, Asp346, Glu349, and Asp350.

Belongs to the phenylalanyl-tRNA synthetase beta subunit family. Type 2 subfamily. As to quaternary structure, tetramer of two alpha and two beta subunits. Mg(2+) serves as cofactor.

The protein resides in the cytoplasm. It carries out the reaction tRNA(Phe) + L-phenylalanine + ATP = L-phenylalanyl-tRNA(Phe) + AMP + diphosphate + H(+). This Borreliella burgdorferi (strain ATCC 35210 / DSM 4680 / CIP 102532 / B31) (Borrelia burgdorferi) protein is Phenylalanine--tRNA ligase beta subunit.